The sequence spans 325 residues: Ribonucleoside-diphosphate reductase subunit beta (325 aa).

3 residues coordinate Fe cation: Asp73, Glu104, and His107. The active site involves Tyr111. Residues Glu164, Glu198, and His201 each coordinate Fe cation.

This sequence belongs to the ribonucleoside diphosphate reductase small chain family. As to quaternary structure, tetramer of two alpha and two beta subunits. Fe cation is required as a cofactor.

It carries out the reaction a 2'-deoxyribonucleoside 5'-diphosphate + [thioredoxin]-disulfide + H2O = a ribonucleoside 5'-diphosphate + [thioredoxin]-dithiol. Functionally, provides the precursors necessary for DNA synthesis. Catalyzes the biosynthesis of deoxyribonucleotides from the corresponding ribonucleotides. This is Ribonucleoside-diphosphate reductase subunit beta (nrdF) from Mycobacterium leprae (strain TN).